Consider the following 598-residue polypeptide: Ceramide transfer protein (598 aa).

Residues 1–11 (MSDNQSWNSSG) show a composition bias toward polar residues. The segment at 1–24 (MSDNQSWNSSGSEEDPETESGPPV) is disordered. Residues 23 to 117 (PVERCGVLSK…WIDAIEQHKT (95 aa)) form the PH domain. Ser-126 is modified (phosphoserine). Ser-132 bears the Phosphoserine; by PKD mark. Ser-135 carries the post-translational modification Phosphoserine. The segment at 202 to 221 (DDEDDFPTTRSDGDFLHNTN) is disordered. Positions 268–301 (KREESWQKRHDKEMEKRRRLEEAYKNAMAELKKK) form a coiled coil. Ser-315 carries the post-translational modification Phosphoserine. The FFAT signature appears at 321-327 (EFFDAVE). Residues 363-592 (GTHRFVQKVE…FTSYVQEKTA (230 aa)) enclose the START domain. Glu-446, Gln-467, Asn-504, and Tyr-553 together coordinate an N-acylsphing-4-enine.

As to quaternary structure, interacts with VAPA and VAPB. Interaction with VAPB is less efficient than with VAPA. Interacts (via FFAT motif) with the MOSPD2 (via MSP domain). In terms of processing, phosphorylation on Ser-132 decreases the affinity toward phosphatidylinositol 4-phosphate at Golgi membranes and reduces ceramide transfer activity. Inactivated by hyperphosphorylation of serine residues by CSNK1G2/CK1 that triggers dissociation from the Golgi complex, thus down-regulating ER-to-Golgi transport of ceramide and sphingomyelin synthesis.

Its subcellular location is the cytoplasm. The protein localises to the golgi apparatus. The protein resides in the endoplasmic reticulum. The catalysed reaction is N-hexadecanoylsphing-4-enine(in) = N-hexadecanoylsphing-4-enine(out). Its function is as follows. Shelters ceramides and diacylglycerol lipids inside its START domain and mediates the intracellular trafficking of ceramides and diacylglycerol lipids in a non-vesicular manner. The protein is Ceramide transfer protein (CERT1) of Cricetulus griseus (Chinese hamster).